Consider the following 455-residue polypeptide: MLQKLSMTALVGLFSSVVSLVNADCTYSGGNYYCAQTDAIIYSNVGLSATYQDVTNMDESSCACTQADFTASGSLAPFNEELSVHFRGPIELLQFGVYYPNGESNALKKRSEKQSIESCKEGEAVVSRHKHQHKRDVAVEYVQVTSTVYVDSNGQTVTADSTNTVVGPAVPSSYTKDSTVLSSSAQAVETSESQSSISSSKTTSSAAAASSSSSSSSNTNGDWSRGSYFVPGSTSNCTFMNNQGGTAGSGVWSSCFGNSISFAASDGVSGAASAQALGDVTIKSGNEFMIFSGEECSGNNGDCGYYREGIPAYHGFGGADKIFVFEFSMPSDTSGSAYNQDMPAIWLLNAKIPRTLQYGDASCSCWKTGCGEMDLFEILTAGSDKLISHIHDGQDGGTQDYFERPTDGTLKAAVIFNSSDKTIHIIEVDESFDATLSDDVVDQWLSKSGSSAALP.

Residues 1–23 form the signal peptide; it reads MLQKLSMTALVGLFSSVVSLVNA. Positions 158–221 are disordered; the sequence is TADSTNTVVG…SSSSSSNTNG (64 aa). Positions 172–189 are enriched in polar residues; the sequence is SSYTKDSTVLSSSAQAVE. Positions 190–219 are enriched in low complexity; it reads TSESQSSISSSKTTSSAAAASSSSSSSSNT. Asn236 carries an N-linked (GlcNAc...) asparagine glycan. Residues 372 to 377 carry the ExDxxE motif motif; that stretch reads EMDLFE. N-linked (GlcNAc...) asparagine glycosylation occurs at Asn417.

This sequence belongs to the PGA52 family.

It localises to the secreted. The protein localises to the cell wall. It carries out the reaction Hydrolysis of (1-&gt;3)-beta-D-glucosidic linkages in (1-&gt;3)-beta-D-glucans.. Its function is as follows. Probable circularly permuted 1,3-beta-glucanase involved in cell wall modification through beta-1,3-glucan network alterations such as increased branching or remodeling. This is Probable circularly permuted 1,3-beta-glucanase TOS1 from Saccharomyces cerevisiae (strain ATCC 204508 / S288c) (Baker's yeast).